We begin with the raw amino-acid sequence, 452 residues long: Mitochondrial import inner membrane translocase subunit TIM44 (452 aa).

Phosphothreonine is present on T128. An ATP-binding site is contributed by 166 to 173; sequence GGEKLGRT. Position 180 is a phosphoserine (S180). The residue at position 217 (K217) is an N6-succinyllysine.

It belongs to the Tim44 family. As to quaternary structure, probable component of the PAM complex at least composed of a mitochondrial HSP70 protein, GRPEL1 or GRPEL2, TIMM44, TIMM16/PAM16 and TIMM14/DNAJC19. The complex interacts with the TIMM23 component of the TIM23 complex. Interacts with SLC25A4/ANT1 and SLC25A5/ANT2; leading to inhibit the presequence translocase TIMM23, thereby promoting stabilization of PINK1.

Its subcellular location is the mitochondrion inner membrane. It localises to the mitochondrion matrix. Functionally, essential component of the PAM complex, a complex required for the translocation of transit peptide-containing proteins from the inner membrane into the mitochondrial matrix in an ATP-dependent manner. Recruits mitochondrial HSP70 to drive protein translocation into the matrix using ATP as an energy source. This is Mitochondrial import inner membrane translocase subunit TIM44 (TIMM44) from Homo sapiens (Human).